The primary structure comprises 347 residues: NADH-ubiquinone oxidoreductase chain 2 (347 aa).

A run of 11 helical transmembrane segments spans residues 3-23 (PIIFIIILLTIMLGTIIVMIS), 25-45 (HWLLVWIGFEMNMLAIIPIMM), 67-87 (SMLLMMAVIINLMFSGQWTVM), 96-116 (MLMTMALAMKLGMAPFHFWVP), 122-142 (IPLSSGLILLTWQKLAPMSVL), 145-165 (IFPSINLNLILTLSVLSILIG), 178-198 (IMAYSSIAHMGWMTAVLPYNP), 200-220 (MTLLNLIIYIIMTSTMFTMFM), 239-259 (IMTVLILATLLSMGGLPPLSG), 274-294 (NSIILPTFMAITALLNLYFYM), and 325-345 (FLPTMVVLSTMMLPLTPMLSV).

The protein belongs to the complex I subunit 2 family. Core subunit of respiratory chain NADH dehydrogenase (Complex I) which is composed of 45 different subunits. Interacts with TMEM242.

The protein resides in the mitochondrion inner membrane. It carries out the reaction a ubiquinone + NADH + 5 H(+)(in) = a ubiquinol + NAD(+) + 4 H(+)(out). Functionally, core subunit of the mitochondrial membrane respiratory chain NADH dehydrogenase (Complex I) which catalyzes electron transfer from NADH through the respiratory chain, using ubiquinone as an electron acceptor. Essential for the catalytic activity and assembly of complex I. The sequence is that of NADH-ubiquinone oxidoreductase chain 2 from Bos indicus (Zebu).